The chain runs to 88 residues: Acylphosphatase (88 aa).

Residues 3-88 form the Acylphosphatase-like domain; the sequence is AARFVVSGVV…VPPTEDFVTG (86 aa). Active-site residues include Arg-18 and Asn-36.

It belongs to the acylphosphatase family.

It catalyses the reaction an acyl phosphate + H2O = a carboxylate + phosphate + H(+). In Xanthomonas euvesicatoria pv. vesicatoria (strain 85-10) (Xanthomonas campestris pv. vesicatoria), this protein is Acylphosphatase (acyP).